A 192-amino-acid chain; its full sequence is Adenylate kinase (192 aa).

ATP is bound at residue G10–T18.

The protein belongs to the archaeal adenylate kinase family. Monomer.

It localises to the cytoplasm. The catalysed reaction is AMP + ATP = 2 ADP. In Methanococcus maripaludis (strain DSM 14266 / JCM 13030 / NBRC 101832 / S2 / LL), this protein is Adenylate kinase.